We begin with the raw amino-acid sequence, 136 residues long: Large ribosomal subunit protein uL3 (136 aa).

Glutamine 83 carries the N5-methylglutamine modification.

Belongs to the universal ribosomal protein uL3 family. In terms of assembly, part of the 50S ribosomal subunit. Forms a cluster with proteins L14 and L19. Methylated by PrmB.

One of the primary rRNA binding proteins, it binds directly near the 3'-end of the 23S rRNA, where it nucleates assembly of the 50S subunit. The sequence is that of Large ribosomal subunit protein uL3 (rplC) from Carsonella ruddii.